The chain runs to 341 residues: tRNA N6-adenosine threonylcarbamoyltransferase (341 aa).

Residues H115 and H119 each contribute to the Fe cation site. Substrate contacts are provided by residues 138–142 (VVSGG), D171, G184, D188, and N279. D307 serves as a coordination point for Fe cation.

The protein belongs to the KAE1 / TsaD family. The cofactor is Fe(2+).

Its subcellular location is the cytoplasm. It catalyses the reaction L-threonylcarbamoyladenylate + adenosine(37) in tRNA = N(6)-L-threonylcarbamoyladenosine(37) in tRNA + AMP + H(+). Required for the formation of a threonylcarbamoyl group on adenosine at position 37 (t(6)A37) in tRNAs that read codons beginning with adenine. Is involved in the transfer of the threonylcarbamoyl moiety of threonylcarbamoyl-AMP (TC-AMP) to the N6 group of A37, together with TsaE and TsaB. TsaD likely plays a direct catalytic role in this reaction. This chain is tRNA N6-adenosine threonylcarbamoyltransferase, found in Clostridium kluyveri (strain NBRC 12016).